A 205-amino-acid polypeptide reads, in one-letter code: Octanoyltransferase (205 aa).

Positions 30 to 205 (NLSDELVWLL…ILKQEFHKIF (176 aa)) constitute a BPL/LPL catalytic domain. Substrate contacts are provided by residues 68-75 (RGGKYTYH), 140-142 (AFG), and 153-155 (GIA). The Acyl-thioester intermediate role is filled by C171.

It belongs to the LipB family.

The protein resides in the cytoplasm. It carries out the reaction octanoyl-[ACP] + L-lysyl-[protein] = N(6)-octanoyl-L-lysyl-[protein] + holo-[ACP] + H(+). Its pathway is protein modification; protein lipoylation via endogenous pathway; protein N(6)-(lipoyl)lysine from octanoyl-[acyl-carrier-protein]: step 1/2. In terms of biological role, catalyzes the transfer of endogenously produced octanoic acid from octanoyl-acyl-carrier-protein onto the lipoyl domains of lipoate-dependent enzymes. Lipoyl-ACP can also act as a substrate although octanoyl-ACP is likely to be the physiological substrate. The protein is Octanoyltransferase of Wolbachia pipientis subsp. Culex pipiens (strain wPip).